We begin with the raw amino-acid sequence, 198 residues long: Large ribosomal subunit protein bL25 (198 aa).

Belongs to the bacterial ribosomal protein bL25 family. CTC subfamily. In terms of assembly, part of the 50S ribosomal subunit; part of the 5S rRNA/L5/L18/L25 subcomplex. Contacts the 5S rRNA. Binds to the 5S rRNA independently of L5 and L18.

Functionally, this is one of the proteins that binds to the 5S RNA in the ribosome where it forms part of the central protuberance. The sequence is that of Large ribosomal subunit protein bL25 from Lysinibacillus sphaericus (strain C3-41).